Reading from the N-terminus, the 238-residue chain is B-box zinc finger protein 25 (238 aa).

8 residues coordinate Zn(2+): Cys5, Cys8, Cys28, His33, Cys57, Cys60, Cys80, and His85. Residues 5-47 (CDVCEKAPATLICCADEAALCAKCDVEVHAANKLASKHQRLFL) form a B box-type 1; atypical zinc finger. Residues 57 to 99 (CDICLEKAAFIFCVEDRALLCRDCDEATHAPNTRSANHQRFLA) form a B box-type 2; atypical zinc finger. The disordered stretch occupies residues 115-139 (VEKNHFDPSNQQSLSKPPTQQPAAP). Positions 121–137 (DPSNQQSLSKPPTQQPA) are enriched in polar residues. Residues 226–238 (DDEEEHFLVPDLG) are interaction with COP1.

As to quaternary structure, interacts with COP1 WD40 domain. Interacts with HY5 and HYH. Post-translationally, COP1-mediated ubiquitination and subsequent proteasomal degradation of BBX25/STH occurs in the dark.

It is found in the nucleus. In terms of biological role, acts as a negative regulator of seedling photomorphogenesis. BBX25/STH and BBX24/STO function as transcriptional corepressors of HY5 activity, leading to the down-regulation of BBX22 expression. BBX25/STH acts additively with BBX24/STO during de-etiolation and the hypocotyl shade avoidance response. The protein is B-box zinc finger protein 25 of Arabidopsis thaliana (Mouse-ear cress).